A 242-amino-acid chain; its full sequence is Eukaryotic translation initiation factor 3 subunit J (242 aa).

Residues 1 to 10 (MASWDDEDFE) show a composition bias toward acidic residues. 3 disordered regions span residues 1 to 58 (MASW…KAQR), 71 to 97 (MKLK…MMNA), and 201 to 242 (REEK…DDFM). Residues 11–21 (VPAAATPAVPA) are compositionally biased toward low complexity. A compositionally biased stretch (acidic residues) spans 23–38 (WDDDEEEDVMDSWDAE). Positions 71-89 (MKLKPEDASTKRDRQRQAE) are enriched in basic and acidic residues.

It belongs to the eIF-3 subunit J family. As to quaternary structure, component of the eukaryotic translation initiation factor 3 (eIF-3) complex.

It is found in the cytoplasm. In terms of biological role, component of the eukaryotic translation initiation factor 3 (eIF-3) complex, which is involved in protein synthesis of a specialized repertoire of mRNAs and, together with other initiation factors, stimulates binding of mRNA and methionyl-tRNAi to the 40S ribosome. The eIF-3 complex specifically targets and initiates translation of a subset of mRNAs involved in cell proliferation. The sequence is that of Eukaryotic translation initiation factor 3 subunit J from Yarrowia lipolytica (strain CLIB 122 / E 150) (Yeast).